A 687-amino-acid chain; its full sequence is Glycine--tRNA ligase beta subunit (687 aa).

Belongs to the class-II aminoacyl-tRNA synthetase family. As to quaternary structure, tetramer of two alpha and two beta subunits.

It localises to the cytoplasm. It carries out the reaction tRNA(Gly) + glycine + ATP = glycyl-tRNA(Gly) + AMP + diphosphate. The chain is Glycine--tRNA ligase beta subunit from Geobacter sp. (strain M21).